We begin with the raw amino-acid sequence, 370 residues long: Succinoglycan biosynthesis protein ExoH (370 aa).

Helical transmembrane passes span 14–34 (ILLI…WSPF), 46–66 (VFLG…ISGY), 88–108 (TVLL…YAIQ), 144–164 (LYFL…ALLV), 170–190 (VTLL…IFLK), 193–213 (ILFG…IKML), 216–236 (FAAP…VGLY), 244–264 (LWLD…SWAI), 282–302 (GLSF…WMIW), and 307–327 (LSYY…ILVA). Positions 350-370 (AKRMATQPPQGAQAGYSPQQR) are disordered.

Belongs to the acyltransferase 3 family.

The protein localises to the cell membrane. It functions in the pathway glycan metabolism; exopolysaccharide biosynthesis. In terms of biological role, required for the succinyl modification of the seventh sugar (glucose) of the octasaccharide subunit of succinoglycan (EPS I). This Rhizobium meliloti (strain 1021) (Ensifer meliloti) protein is Succinoglycan biosynthesis protein ExoH (exoH).